The sequence spans 500 residues: L-arabinose isomerase (500 aa).

Mn(2+)-binding residues include glutamate 306, glutamate 333, histidine 350, and histidine 450.

It belongs to the arabinose isomerase family. As to quaternary structure, homohexamer. Mn(2+) is required as a cofactor.

It carries out the reaction beta-L-arabinopyranose = L-ribulose. It functions in the pathway carbohydrate degradation; L-arabinose degradation via L-ribulose; D-xylulose 5-phosphate from L-arabinose (bacterial route): step 1/3. Functionally, catalyzes the conversion of L-arabinose to L-ribulose. This Salmonella choleraesuis (strain SC-B67) protein is L-arabinose isomerase.